Reading from the N-terminus, the 339-residue chain is Putative NADP-dependent oxidoreductase YfmJ (339 aa).

Residues 156-159 (GAVG), lysine 182, tyrosine 198, asparagine 222, 244-250 (CGAISSY), 277-279 (FIV), and asparagine 327 contribute to the NADP(+) site.

The protein belongs to the NADP-dependent oxidoreductase L4BD family.

Functionally, putative quinone oxidoreductase that may contribute to the degradation of aromatic compounds. This chain is Putative NADP-dependent oxidoreductase YfmJ (yfmJ), found in Bacillus subtilis (strain 168).